We begin with the raw amino-acid sequence, 223 residues long: Cytochrome c biogenesis ATP-binding export protein CcmA (223 aa).

Residues 20 to 222 form the ABC transporter domain; it reads LAAHALTYSR…PTRLLHLKKA (203 aa). ATP is bound at residue 52 to 59; sequence GPNGIGKT.

This sequence belongs to the ABC transporter superfamily. CcmA exporter (TC 3.A.1.107) family. As to quaternary structure, the complex is composed of two ATP-binding proteins (CcmA) and two transmembrane proteins (CcmB).

Its subcellular location is the cell inner membrane. It carries out the reaction heme b(in) + ATP + H2O = heme b(out) + ADP + phosphate + H(+). Part of the ABC transporter complex CcmAB involved in the biogenesis of c-type cytochromes; once thought to export heme, this seems not to be the case, but its exact role is uncertain. Responsible for energy coupling to the transport system. This chain is Cytochrome c biogenesis ATP-binding export protein CcmA, found in Xylella fastidiosa (strain 9a5c).